Consider the following 210-residue polypeptide: Probable nicotinate-nucleotide adenylyltransferase (210 aa).

Belongs to the NadD family.

It catalyses the reaction nicotinate beta-D-ribonucleotide + ATP + H(+) = deamido-NAD(+) + diphosphate. It functions in the pathway cofactor biosynthesis; NAD(+) biosynthesis; deamido-NAD(+) from nicotinate D-ribonucleotide: step 1/1. In terms of biological role, catalyzes the reversible adenylation of nicotinate mononucleotide (NaMN) to nicotinic acid adenine dinucleotide (NaAD). The protein is Probable nicotinate-nucleotide adenylyltransferase of Streptococcus mutans serotype c (strain ATCC 700610 / UA159).